The following is a 289-amino-acid chain: MPIAKPINQNTTVPYPPQHYSKPPLVIILTVILLVVFFIGFFAIYFCKCFYHTLTEAWNHHYHNGLPENQIQAQQEPVQPPVNPGLEPHIIQSYPLFPFSSVKDLREDKYGLECAICLLEFEEEHILLRLLTTCYHVFHQECIDQWLESNKTCPVCRRNLDPNAPENIKELIIEVIQENAHENRDQEQTSTSNEVMLSRQSSGNNERKIETLPDKFSRSKTTGHSIVRNKPEEEDRYTLRLPDHVKIKVTRRHNNNQTESCISFGELVRNREGRFGEVSGQSLVPESGS.

The chain crosses the membrane as a helical span at residues 26 to 46; the sequence is VIILTVILLVVFFIGFFAIYF. The RING-type; atypical zinc-finger motif lies at 114–157; that stretch reads CAICLLEFEEEHILLRLLTTCYHVFHQECIDQWLESNKTCPVCR. Residues 181–206 form a disordered region; sequence HENRDQEQTSTSNEVMLSRQSSGNNE. Positions 188–204 are enriched in polar residues; that stretch reads QTSTSNEVMLSRQSSGN.

Belongs to the RING-type zinc finger family. ATL subfamily.

It is found in the membrane. The enzyme catalyses S-ubiquitinyl-[E2 ubiquitin-conjugating enzyme]-L-cysteine + [acceptor protein]-L-lysine = [E2 ubiquitin-conjugating enzyme]-L-cysteine + N(6)-ubiquitinyl-[acceptor protein]-L-lysine.. The protein operates within protein modification; protein ubiquitination. This Arabidopsis thaliana (Mouse-ear cress) protein is RING-H2 finger protein ATL30 (ATL30).